The chain runs to 432 residues: ATP-dependent RNA helicase RhlB (432 aa).

The Q motif signature appears at 9–37 (QNFADLGLQPQVIDGLNAKGFIKCTPIQA). Residues 40–219 (LPVLLAGQDI…FEHMQEPEHV (180 aa)) form the Helicase ATP-binding domain. 53–60 (AQTGTGKT) contributes to the ATP binding site. Residues 165-168 (DEAD) carry the DEAD box motif. Positions 245–390 (ALLQTLIEEE…QSDYDASALL (146 aa)) constitute a Helicase C-terminal domain. The segment at 397-432 (LRLQRRPQQNRRNNNGQRQGGNRKHSRPRQPRNTQS) is disordered. A compositionally biased stretch (basic residues) spans 417 to 426 (GNRKHSRPRQ).

This sequence belongs to the DEAD box helicase family. RhlB subfamily. Component of the RNA degradosome, which is a multiprotein complex involved in RNA processing and mRNA degradation.

It is found in the cytoplasm. It carries out the reaction ATP + H2O = ADP + phosphate + H(+). DEAD-box RNA helicase involved in RNA degradation. Has RNA-dependent ATPase activity and unwinds double-stranded RNA. This is ATP-dependent RNA helicase RhlB from Aliivibrio fischeri (strain MJ11) (Vibrio fischeri).